We begin with the raw amino-acid sequence, 502 residues long: Glycerol kinase (502 aa).

Residue Thr-14 participates in ADP binding. ATP-binding residues include Thr-14, Thr-15, and Ser-16. Thr-14 is a binding site for sn-glycerol 3-phosphate. Residue Arg-18 participates in ADP binding. Sn-glycerol 3-phosphate-binding residues include Arg-84, Glu-85, Tyr-136, and Asp-246. Residues Arg-84, Glu-85, Tyr-136, Asp-246, and Gln-247 each coordinate glycerol. 2 residues coordinate ADP: Thr-268 and Gly-311. The ATP site is built by Thr-268, Gly-311, Gln-315, and Gly-412. ADP contacts are provided by Gly-412 and Asn-416.

This sequence belongs to the FGGY kinase family. In terms of assembly, homotetramer and homodimer (in equilibrium). Heterodimer with EIIA-Glc. Binds 1 zinc ion per glycerol kinase EIIA-Glc dimer. The zinc ion is important for dimerization.

It carries out the reaction glycerol + ATP = sn-glycerol 3-phosphate + ADP + H(+). It participates in polyol metabolism; glycerol degradation via glycerol kinase pathway; sn-glycerol 3-phosphate from glycerol: step 1/1. Its activity is regulated as follows. Activity of this regulatory enzyme is affected by several metabolites. Allosterically and non-competitively inhibited by fructose 1,6-bisphosphate (FBP) and unphosphorylated phosphocarrier protein EIIA-Glc (III-Glc), an integral component of the bacterial phosphotransferase (PTS) system. Functionally, key enzyme in the regulation of glycerol uptake and metabolism. Catalyzes the phosphorylation of glycerol to yield sn-glycerol 3-phosphate. In Escherichia coli (strain ATCC 8739 / DSM 1576 / NBRC 3972 / NCIMB 8545 / WDCM 00012 / Crooks), this protein is Glycerol kinase.